The chain runs to 325 residues: uncharacterized protein (325 aa).

Residues 67 to 87 (WIPFFLLFSSVVVLGGLWWLG) traverse the membrane as a helical segment.

It is found in the membrane. This is an uncharacterized protein from Synechocystis sp. (strain ATCC 27184 / PCC 6803 / Kazusa).